Here is a 483-residue protein sequence, read N- to C-terminus: Dual specificity protein phosphatase 10 (483 aa).

Positions 169–286 (PSQGPVIIDC…FKQNHGNLCD (118 aa)) constitute a Rhodanese domain. An interaction with MAP kinases region spans residues 200–216 (KISRRRLQQGKITVLDL). Residues 322-465 (ELTPILPFLF…LLEFEEDLNN (144 aa)) enclose the Tyrosine-protein phosphatase domain. Cysteine 409 serves as the catalytic Phosphocysteine intermediate.

This sequence belongs to the protein-tyrosine phosphatase family. Non-receptor class dual specificity subfamily. Monomer. Interacts with MAPK14.

The protein localises to the cytoplasm. The protein resides in the nucleus. The catalysed reaction is O-phospho-L-tyrosyl-[protein] + H2O = L-tyrosyl-[protein] + phosphate. It catalyses the reaction O-phospho-L-seryl-[protein] + H2O = L-seryl-[protein] + phosphate. The enzyme catalyses O-phospho-L-threonyl-[protein] + H2O = L-threonyl-[protein] + phosphate. In terms of biological role, protein phosphatase involved in the inactivation of MAP kinases. Has a specificity for the MAPK11/MAPK12/MAPK13/MAPK14 subfamily. It preferably dephosphorylates p38. The sequence is that of Dual specificity protein phosphatase 10 (Dusp10) from Mus musculus (Mouse).